A 138-amino-acid chain; its full sequence is Putative pre-16S rRNA nuclease (138 aa).

It belongs to the YqgF nuclease family.

The protein resides in the cytoplasm. Functionally, could be a nuclease involved in processing of the 5'-end of pre-16S rRNA. The polypeptide is Putative pre-16S rRNA nuclease (Mycoplasma genitalium (strain ATCC 33530 / DSM 19775 / NCTC 10195 / G37) (Mycoplasmoides genitalium)).